The primary structure comprises 614 residues: 4-hydroxy-3-methylbut-2-en-1-yl diphosphate synthase (flavodoxin) (614 aa).

[4Fe-4S] cluster is bound by residues cysteine 522, cysteine 525, cysteine 556, and glutamate 563.

It belongs to the IspG family. Requires [4Fe-4S] cluster as cofactor.

It carries out the reaction (2E)-4-hydroxy-3-methylbut-2-enyl diphosphate + oxidized [flavodoxin] + H2O + 2 H(+) = 2-C-methyl-D-erythritol 2,4-cyclic diphosphate + reduced [flavodoxin]. The protein operates within isoprenoid biosynthesis; isopentenyl diphosphate biosynthesis via DXP pathway; isopentenyl diphosphate from 1-deoxy-D-xylulose 5-phosphate: step 5/6. In terms of biological role, converts 2C-methyl-D-erythritol 2,4-cyclodiphosphate (ME-2,4cPP) into 1-hydroxy-2-methyl-2-(E)-butenyl 4-diphosphate. In Phocaeicola vulgatus (strain ATCC 8482 / DSM 1447 / JCM 5826 / CCUG 4940 / NBRC 14291 / NCTC 11154) (Bacteroides vulgatus), this protein is 4-hydroxy-3-methylbut-2-en-1-yl diphosphate synthase (flavodoxin).